A 518-amino-acid chain; its full sequence is 3-phosphoshikimate 1-carboxyvinyltransferase 1, chloroplastic (518 aa).

The transit peptide at 1–74 directs the protein to the chloroplast; sequence MAQISSMGQG…RISASVVTAQ (74 aa). Residues K97, S98, and R102 each contribute to the 3-phosphoshikimate site. K97 is a phosphoenolpyruvate binding site. G175 and R205 together coordinate phosphoenolpyruvate. 3-phosphoshikimate is bound by residues S252, S253, Q254, S280, D405, and K432. Residue Q254 participates in phosphoenolpyruvate binding. D405 (proton acceptor) is an active-site residue. Positions 436, 478, and 503 each coordinate phosphoenolpyruvate.

Belongs to the EPSP synthase family.

The protein localises to the plastid. It localises to the chloroplast. It catalyses the reaction 3-phosphoshikimate + phosphoenolpyruvate = 5-O-(1-carboxyvinyl)-3-phosphoshikimate + phosphate. The protein operates within metabolic intermediate biosynthesis; chorismate biosynthesis; chorismate from D-erythrose 4-phosphate and phosphoenolpyruvate: step 6/7. Functionally, catalyzes the transfer of the enolpyruvyl moiety of phosphoenolpyruvate (PEP) to the 5-hydroxyl of shikimate-3-phosphate (S3P) to produce enolpyruvyl shikimate-3-phosphate and inorganic phosphate. In Nicotiana tabacum (Common tobacco), this protein is 3-phosphoshikimate 1-carboxyvinyltransferase 1, chloroplastic (EPSPS-1).